The chain runs to 467 residues: Iroquois-class homeodomain protein irx-1-A (467 aa).

The segment at residues 126–188 (DPGRPKNATR…NARRRLKKEN (63 aa)) is a DNA-binding region (homeobox; TALE-type). Disordered regions lie at residues 197–306 (KEDD…PPHS), 318–344 (TSPD…QHPA), and 410–467 (SLSS…LPSA). Acidic residues-rich tracts occupy residues 215–225 (EDDEEIDLESI) and 233–244 (NDGEQSNEEEDE). Positions 245 to 262 (KLEHLRQGEKESLKKESE) are enriched in basic and acidic residues. The span at 415–431 (KTPERTSPKHSDRENVP) shows a compositional bias: basic and acidic residues. Polar residues predominate over residues 447-460 (RENTLSQQEGTSRI).

This sequence belongs to the TALE/IRO homeobox family. As to expression, expressed early in neural differentiation in the neural plate, and expression continues in the neural tube after neural fold closure. Expressed in the presumptive midbrain territory. Also expressed in the prospective neural crest and the preplacodal field, anterior to the neural plate. Strongly expressed in the profundal placode and weakly expressed in the trigeminal placode. Also expressed in the mesoderm in the Spemann organizer from the start of gastrulation, and subsequently in its derivatives; namely in the notochord as well as in the somites of stage 25 embryos, and the somites and notochord of tailbud embryos. Also expressed in specific and overlapping dynamic patterns with irx2 and irx3 during pronephric kidney development. Renal expression begins in the dorsal region of the pronephric anlage at mid neurula stage and continues to at least tailbud stages where expression is confined to the intermediate tubule segment IT1. Renal expression is maintained at tadpole stages.

Its subcellular location is the nucleus. Acts partially redundantly with other irx members in neural patterning. Required for formation of the posterior forebrain, midbrain, hindbrain, and to a lesser extent, spinal cord. Acts early in neural plate development to induce expression of some but not all proneural genes, and specify a neural precursor state. Also up-regulates repressors that prevent neuronal differentiation. Patterns the neuroectoderm in both the anterior/posterior and dorsal/ventral axes. Acts primarily as a transcriptional repressor during neural development, and binds to the bmp4 promoter to repress gene expression and thus mediate down-regulation of bmp4 by wnt signaling. Controls multiple processes through bmp4-repression including neural plate development, neural crest specification and Spemann organizer development. Involved in the specification of the preplacodal field at the anterior border of the neural plate. Regulates the genetic cascade of interactions that are necessary for positioning the isthmus organizer and the formation of the midbrain-hindbrain boundary. Required during at least two stages of pronephros kidney development; during neurula stages, maintains transcription of key renal genes to define the size and identity of the pronephric anlage, probably in part through regulation of bmp-signaling. Subsequently required for proper formation of the intermediate tubule segment of the pronephros. Acts principally as a transcriptional activator during pronephros development. The polypeptide is Iroquois-class homeodomain protein irx-1-A (irx1-a) (Xenopus laevis (African clawed frog)).